The chain runs to 93 residues: YcgL domain-containing protein AHA_2135 (93 aa).

Residues 1 to 85 (MLCAVYKSRK…PPENLLEQHK (85 aa)) enclose the YcgL domain.

The chain is YcgL domain-containing protein AHA_2135 from Aeromonas hydrophila subsp. hydrophila (strain ATCC 7966 / DSM 30187 / BCRC 13018 / CCUG 14551 / JCM 1027 / KCTC 2358 / NCIMB 9240 / NCTC 8049).